The chain runs to 187 residues: ATP synthase subunit b, chloroplastic (187 aa).

A helical membrane pass occupies residues 34-56; the sequence is LINLAAVIGLLFYSGRSFLTNLL.

It belongs to the ATPase B chain family. In terms of assembly, F-type ATPases have 2 components, F(1) - the catalytic core - and F(0) - the membrane proton channel. F(1) has five subunits: alpha(3), beta(3), gamma(1), delta(1), epsilon(1). F(0) has four main subunits: a(1), b(1), b'(1) and c(10-14). The alpha and beta chains form an alternating ring which encloses part of the gamma chain. F(1) is attached to F(0) by a central stalk formed by the gamma and epsilon chains, while a peripheral stalk is formed by the delta, b and b' chains.

It localises to the plastid. The protein localises to the chloroplast thylakoid membrane. In terms of biological role, f(1)F(0) ATP synthase produces ATP from ADP in the presence of a proton or sodium gradient. F-type ATPases consist of two structural domains, F(1) containing the extramembraneous catalytic core and F(0) containing the membrane proton channel, linked together by a central stalk and a peripheral stalk. During catalysis, ATP synthesis in the catalytic domain of F(1) is coupled via a rotary mechanism of the central stalk subunits to proton translocation. Its function is as follows. Component of the F(0) channel, it forms part of the peripheral stalk, linking F(1) to F(0). The polypeptide is ATP synthase subunit b, chloroplastic (Chlorokybus atmophyticus (Soil alga)).